Consider the following 319-residue polypeptide: Aspartate carbamoyltransferase catalytic subunit (319 aa).

Carbamoyl phosphate-binding residues include arginine 54 and threonine 55. Lysine 82 lines the L-aspartate pocket. Carbamoyl phosphate contacts are provided by arginine 104, histidine 134, and glutamine 137. Arginine 171 and arginine 227 together coordinate L-aspartate. Carbamoyl phosphate-binding residues include glycine 271 and proline 272.

The protein belongs to the aspartate/ornithine carbamoyltransferase superfamily. ATCase family. In terms of assembly, heterododecamer (2C3:3R2) of six catalytic PyrB chains organized as two trimers (C3), and six regulatory PyrI chains organized as three dimers (R2).

It catalyses the reaction carbamoyl phosphate + L-aspartate = N-carbamoyl-L-aspartate + phosphate + H(+). It functions in the pathway pyrimidine metabolism; UMP biosynthesis via de novo pathway; (S)-dihydroorotate from bicarbonate: step 2/3. Its function is as follows. Catalyzes the condensation of carbamoyl phosphate and aspartate to form carbamoyl aspartate and inorganic phosphate, the committed step in the de novo pyrimidine nucleotide biosynthesis pathway. The chain is Aspartate carbamoyltransferase catalytic subunit from Kineococcus radiotolerans (strain ATCC BAA-149 / DSM 14245 / SRS30216).